The sequence spans 76 residues: UPF0248 protein MmarC5_1387 (76 aa).

Belongs to the UPF0248 family.

This chain is UPF0248 protein MmarC5_1387, found in Methanococcus maripaludis (strain C5 / ATCC BAA-1333).